The sequence spans 380 residues: MKKISILGSTGSIGTQTLDVIREHGDMQVVALSCGRNLSLIEKQAREFKPQFVSVSDENDAKKLRTSLADTDIEVGYGMDGLIRCATIEPCDIVVTAIVGMLGIRPTIAAIKAKKTIALANKETLVTAGHIIIPLAKEYGVSILPVDSEHSAIFQSLQGNSMNPIKKILLTASGGPFRGRKLSELEGIRVEDALKHPNWSMGQKITIDSSTMVNKGLEVIEAKWLFDVDLSQIQVVVHPQSVIHSAVEYADGAVIAQLGTPDMRIPIQYALYYPSRPALSGDRLDLFKLKDLTFEAPDLDTFKGLALAMKAARAGGNIPTAFNAANERAVALFLNKKIKYLEIIDIIEACMENASFIENPSVDEILDTEQCAYDYISKRW.

Residues T10, G11, S12, I13, G35, R36, N37, and N121 each contribute to the NADPH site. K122 lines the 1-deoxy-D-xylulose 5-phosphate pocket. E123 serves as a coordination point for NADPH. D147 lines the Mn(2+) pocket. 1-deoxy-D-xylulose 5-phosphate-binding residues include S148, E149, S173, and H196. E149 contacts Mn(2+). An NADPH-binding site is contributed by G202. 1-deoxy-D-xylulose 5-phosphate is bound by residues S209, N214, K215, and E218. Mn(2+) is bound at residue E218.

Belongs to the DXR family. Mg(2+) is required as a cofactor. Mn(2+) serves as cofactor.

The catalysed reaction is 2-C-methyl-D-erythritol 4-phosphate + NADP(+) = 1-deoxy-D-xylulose 5-phosphate + NADPH + H(+). It participates in isoprenoid biosynthesis; isopentenyl diphosphate biosynthesis via DXP pathway; isopentenyl diphosphate from 1-deoxy-D-xylulose 5-phosphate: step 1/6. In terms of biological role, catalyzes the NADPH-dependent rearrangement and reduction of 1-deoxy-D-xylulose-5-phosphate (DXP) to 2-C-methyl-D-erythritol 4-phosphate (MEP). This chain is 1-deoxy-D-xylulose 5-phosphate reductoisomerase, found in Agathobacter rectalis (strain ATCC 33656 / DSM 3377 / JCM 17463 / KCTC 5835 / VPI 0990) (Eubacterium rectale).